Consider the following 437-residue polypeptide: Methylenetetrahydrofolate--tRNA-(uracil-5-)-methyltransferase TrmFO (437 aa).

Residue glycine 10 to glycine 15 participates in FAD binding.

The protein belongs to the MnmG family. TrmFO subfamily. FAD is required as a cofactor.

The protein resides in the cytoplasm. The enzyme catalyses uridine(54) in tRNA + (6R)-5,10-methylene-5,6,7,8-tetrahydrofolate + NADH + H(+) = 5-methyluridine(54) in tRNA + (6S)-5,6,7,8-tetrahydrofolate + NAD(+). It catalyses the reaction uridine(54) in tRNA + (6R)-5,10-methylene-5,6,7,8-tetrahydrofolate + NADPH + H(+) = 5-methyluridine(54) in tRNA + (6S)-5,6,7,8-tetrahydrofolate + NADP(+). In terms of biological role, catalyzes the folate-dependent formation of 5-methyl-uridine at position 54 (M-5-U54) in all tRNAs. The sequence is that of Methylenetetrahydrofolate--tRNA-(uracil-5-)-methyltransferase TrmFO from Lysinibacillus sphaericus (strain C3-41).